The chain runs to 501 residues: Glutamate--tRNA ligase (501 aa).

A 'HIGH' region motif is present at residues 11–21 (PSPTGALHIGG). Positions 260-264 (KLSKR) match the 'KMSKS' region motif. Residue K263 participates in ATP binding.

It belongs to the class-I aminoacyl-tRNA synthetase family. Glutamate--tRNA ligase type 1 subfamily. In terms of assembly, monomer.

It is found in the cytoplasm. It carries out the reaction tRNA(Glu) + L-glutamate + ATP = L-glutamyl-tRNA(Glu) + AMP + diphosphate. Functionally, catalyzes the attachment of glutamate to tRNA(Glu) in a two-step reaction: glutamate is first activated by ATP to form Glu-AMP and then transferred to the acceptor end of tRNA(Glu). The protein is Glutamate--tRNA ligase of Flavobacterium psychrophilum (strain ATCC 49511 / DSM 21280 / CIP 103535 / JIP02/86).